Here is a 488-residue protein sequence, read N- to C-terminus: Probable cytosol aminopeptidase (488 aa).

Residues Lys253 and Asp258 each contribute to the Mn(2+) site. Residue Lys265 is part of the active site. The Mn(2+) site is built by Asp276, Asp335, and Glu337. Arg339 is an active-site residue.

This sequence belongs to the peptidase M17 family. Mn(2+) serves as cofactor.

The protein resides in the cytoplasm. It catalyses the reaction Release of an N-terminal amino acid, Xaa-|-Yaa-, in which Xaa is preferably Leu, but may be other amino acids including Pro although not Arg or Lys, and Yaa may be Pro. Amino acid amides and methyl esters are also readily hydrolyzed, but rates on arylamides are exceedingly low.. The enzyme catalyses Release of an N-terminal amino acid, preferentially leucine, but not glutamic or aspartic acids.. Functionally, presumably involved in the processing and regular turnover of intracellular proteins. Catalyzes the removal of unsubstituted N-terminal amino acids from various peptides. This chain is Probable cytosol aminopeptidase, found in Dinoroseobacter shibae (strain DSM 16493 / NCIMB 14021 / DFL 12).